Here is a 526-residue protein sequence, read N- to C-terminus: Peptide chain release factor 3 (526 aa).

Residues 9 to 277 form the tr-type G domain; it reads DKRRTFAIIS…GIVEWAPIPQ (269 aa). Residues 18–25, 86–90, and 140–143 contribute to the GTP site; these read SHPDAGKT, DTPGH, and NKLD.

The protein belongs to the TRAFAC class translation factor GTPase superfamily. Classic translation factor GTPase family. PrfC subfamily.

It is found in the cytoplasm. Increases the formation of ribosomal termination complexes and stimulates activities of RF-1 and RF-2. It binds guanine nucleotides and has strong preference for UGA stop codons. It may interact directly with the ribosome. The stimulation of RF-1 and RF-2 is significantly reduced by GTP and GDP, but not by GMP. This Shewanella halifaxensis (strain HAW-EB4) protein is Peptide chain release factor 3.